The following is a 315-amino-acid chain: DNA-directed RNA polymerase subunit alpha (315 aa).

Positions 1-228 (MLEIEKPKIE…EHFKLFMTLT (228 aa)) are alpha N-terminal domain (alpha-NTD). The interval 245–315 (KEKVLEMAIE…LGLSLKQNED (71 aa)) is alpha C-terminal domain (alpha-CTD).

The protein belongs to the RNA polymerase alpha chain family. In terms of assembly, homodimer. The RNAP catalytic core consists of 2 alpha, 1 beta, 1 beta' and 1 omega subunit. When a sigma factor is associated with the core the holoenzyme is formed, which can initiate transcription.

It catalyses the reaction RNA(n) + a ribonucleoside 5'-triphosphate = RNA(n+1) + diphosphate. DNA-dependent RNA polymerase catalyzes the transcription of DNA into RNA using the four ribonucleoside triphosphates as substrates. This is DNA-directed RNA polymerase subunit alpha from Clostridium kluyveri (strain NBRC 12016).